A 193-amino-acid chain; its full sequence is Ion-translocating oxidoreductase complex subunit A (193 aa).

The next 6 helical transmembrane spans lie at 5-25 (LLLFVGTVLVNNFVLVKFLGL), 47-67 (FVMTLATIFSWIIDHLILVPL), 72-92 (LRTMAFILVIAVVVQFTEMVV), 102-122 (LLGIYLPLITTNCAVLGVALL), 134-154 (ALYGFSAAVGFSLVMVLFAAI), and 171-191 (AIALVTAGLMSLAFMGFSGLV).

The protein belongs to the NqrDE/RnfAE family. The complex is composed of six subunits: RnfA, RnfB, RnfC, RnfD, RnfE and RnfG.

It is found in the cell inner membrane. Part of a membrane-bound complex that couples electron transfer with translocation of ions across the membrane. The sequence is that of Ion-translocating oxidoreductase complex subunit A from Cronobacter sakazakii (strain ATCC BAA-894) (Enterobacter sakazakii).